A 222-amino-acid chain; its full sequence is N-(5'-phosphoribosyl)anthranilate isomerase (222 aa).

It belongs to the TrpF family.

The enzyme catalyses N-(5-phospho-beta-D-ribosyl)anthranilate = 1-(2-carboxyphenylamino)-1-deoxy-D-ribulose 5-phosphate. It functions in the pathway amino-acid biosynthesis; L-tryptophan biosynthesis; L-tryptophan from chorismate: step 3/5. The chain is N-(5'-phosphoribosyl)anthranilate isomerase from Symbiobacterium thermophilum (strain DSM 24528 / JCM 14929 / IAM 14863 / T).